We begin with the raw amino-acid sequence, 177 residues long: Insertion element IS1223 uncharacterized 20.7 kDa protein (177 aa).

A disordered region spans residues 112-131 (KQKGRPRKVPKKSKKTTKKL). Over residues 113–128 (QKGRPRKVPKKSKKTT) the composition is skewed to basic residues.

Belongs to the IS150/IS1296 orfA family.

The sequence is that of Insertion element IS1223 uncharacterized 20.7 kDa protein from Lactobacillus johnsonii.